The sequence spans 107 residues: Glutaredoxin-1 (107 aa).

An N-acetylalanine modification is found at Ala2. Residues 3–106 (QEFVNCKIQS…TRLKQIGALQ (104 aa)) enclose the Glutaredoxin domain. Residue Lys9 is modified to N6-succinyllysine. Cystine bridges form between Cys23–Cys26 and Cys79–Cys83.

It belongs to the glutaredoxin family.

Its subcellular location is the cytoplasm. Functionally, has a glutathione-disulfide oxidoreductase activity in the presence of NADPH and glutathione reductase. Reduces low molecular weight disulfides and proteins. This Mus musculus (Mouse) protein is Glutaredoxin-1 (Glrx).